The sequence spans 252 residues: Imidazole glycerol phosphate synthase subunit HisF (252 aa).

Residues aspartate 11 and aspartate 130 contribute to the active site.

This sequence belongs to the HisA/HisF family. Heterodimer of HisH and HisF.

The protein resides in the cytoplasm. The enzyme catalyses 5-[(5-phospho-1-deoxy-D-ribulos-1-ylimino)methylamino]-1-(5-phospho-beta-D-ribosyl)imidazole-4-carboxamide + L-glutamine = D-erythro-1-(imidazol-4-yl)glycerol 3-phosphate + 5-amino-1-(5-phospho-beta-D-ribosyl)imidazole-4-carboxamide + L-glutamate + H(+). Its pathway is amino-acid biosynthesis; L-histidine biosynthesis; L-histidine from 5-phospho-alpha-D-ribose 1-diphosphate: step 5/9. Functionally, IGPS catalyzes the conversion of PRFAR and glutamine to IGP, AICAR and glutamate. The HisF subunit catalyzes the cyclization activity that produces IGP and AICAR from PRFAR using the ammonia provided by the HisH subunit. The sequence is that of Imidazole glycerol phosphate synthase subunit HisF from Streptococcus sanguinis (strain SK36).